The following is a 448-amino-acid chain: C4-dicarboxylate transport protein (448 aa).

Transmembrane regions (helical) follow at residues 9 to 29, 59 to 79, 91 to 111, 159 to 179, 203 to 223, 237 to 257, 312 to 332, 345 to 365, and 367 to 387; these read SLYF…HFYP, LIKM…IAGM, VALL…LLVI, AFAN…GFAL, IVNM…AFTI, LIIC…GTIS, GYSF…IFIA, ITLL…TGSG, and IVMA…LALI.

This sequence belongs to the dicarboxylate/amino acid:cation symporter (DAACS) (TC 2.A.23) family.

The protein resides in the cell inner membrane. Its function is as follows. Responsible for the transport of dicarboxylates such as succinate, fumarate, and malate from the periplasm across the membrane. This chain is C4-dicarboxylate transport protein, found in Acinetobacter baylyi (strain ATCC 33305 / BD413 / ADP1).